Here is a 210-residue protein sequence, read N- to C-terminus: Thymidylate kinase (210 aa).

10 to 17 (GGEGAGKS) serves as a coordination point for ATP.

Belongs to the thymidylate kinase family.

The enzyme catalyses dTMP + ATP = dTDP + ADP. Functionally, phosphorylation of dTMP to form dTDP in both de novo and salvage pathways of dTTP synthesis. This is Thymidylate kinase from Magnetococcus marinus (strain ATCC BAA-1437 / JCM 17883 / MC-1).